Reading from the N-terminus, the 86-residue chain is MNSLLMITACLVLIGTVWAKDGYLVEKTGCKKTCYKLGENDFCNRECKWKHIGGSYGYCYGFGCYCEGLPDSTQTWPLPNKTCGKK.

A signal peptide spans 1–19 (MNSLLMITACLVLIGTVWA). In terms of domain architecture, LCN-type CS-alpha/beta spans 20-84 (KDGYLVEKTG…TWPLPNKTCG (65 aa)). 4 disulfides stabilise this stretch: Cys30/Cys83, Cys34/Cys59, Cys43/Cys64, and Cys47/Cys66. Cys83 carries the cysteine amide modification.

It belongs to the long (4 C-C) scorpion toxin superfamily. Sodium channel inhibitor family. Beta subfamily. As to expression, expressed by the venom gland.

Its subcellular location is the secreted. Beta toxins bind voltage-independently at site-4 of sodium channels (Nav) and shift the voltage of activation toward more negative potentials thereby affecting sodium channel activation and promoting spontaneous and repetitive firing. Affects channels from chicken and frog. The protein is Beta-toxin CsEI of Centruroides sculpturatus (Arizona bark scorpion).